A 150-amino-acid polypeptide reads, in one-letter code: D-aminoacyl-tRNA deacylase (150 aa).

Residues 137-138 (GP) carry the Gly-cisPro motif, important for rejection of L-amino acids motif.

Belongs to the DTD family. Homodimer.

Its subcellular location is the cytoplasm. It catalyses the reaction glycyl-tRNA(Ala) + H2O = tRNA(Ala) + glycine + H(+). It carries out the reaction a D-aminoacyl-tRNA + H2O = a tRNA + a D-alpha-amino acid + H(+). An aminoacyl-tRNA editing enzyme that deacylates mischarged D-aminoacyl-tRNAs. Also deacylates mischarged glycyl-tRNA(Ala), protecting cells against glycine mischarging by AlaRS. Acts via tRNA-based rather than protein-based catalysis; rejects L-amino acids rather than detecting D-amino acids in the active site. By recycling D-aminoacyl-tRNA to D-amino acids and free tRNA molecules, this enzyme counteracts the toxicity associated with the formation of D-aminoacyl-tRNA entities in vivo and helps enforce protein L-homochirality. The polypeptide is D-aminoacyl-tRNA deacylase (Listeria innocua serovar 6a (strain ATCC BAA-680 / CLIP 11262)).